The following is a 404-amino-acid chain: Serine/threonine transporter SstT (404 aa).

9 consecutive transmembrane segments (helical) span residues 17 to 37, 39 to 59, 75 to 95, 138 to 158, 179 to 199, 212 to 232, 287 to 307, 319 to 339, and 354 to 374; these read IGIG…VTAI, ILGQ…VFAL, MTLI…VAVI, ALAT…GLAL, IVVW…FSTV, LLIL…NPLL, IPLG…VLTL, FLTA…ASGV, and FGIS…VGVI.

It belongs to the dicarboxylate/amino acid:cation symporter (DAACS) (TC 2.A.23) family.

Its subcellular location is the cell membrane. It carries out the reaction L-serine(in) + Na(+)(in) = L-serine(out) + Na(+)(out). The enzyme catalyses L-threonine(in) + Na(+)(in) = L-threonine(out) + Na(+)(out). In terms of biological role, involved in the import of serine and threonine into the cell, with the concomitant import of sodium (symport system). This chain is Serine/threonine transporter SstT, found in Streptococcus equi subsp. equi (strain 4047).